Reading from the N-terminus, the 507-residue chain is Histidine ammonia-lyase (507 aa).

Positions 141-143 form a cross-link, 5-imidazolinone (Ala-Gly); it reads ASG. S142 is subject to 2,3-didehydroalanine (Ser).

It belongs to the PAL/histidase family. Contains an active site 4-methylidene-imidazol-5-one (MIO), which is formed autocatalytically by cyclization and dehydration of residues Ala-Ser-Gly.

The protein localises to the cytoplasm. It catalyses the reaction L-histidine = trans-urocanate + NH4(+). Its pathway is amino-acid degradation; L-histidine degradation into L-glutamate; N-formimidoyl-L-glutamate from L-histidine: step 1/3. This chain is Histidine ammonia-lyase, found in Cereibacter sphaeroides (strain ATCC 17023 / DSM 158 / JCM 6121 / CCUG 31486 / LMG 2827 / NBRC 12203 / NCIMB 8253 / ATH 2.4.1.) (Rhodobacter sphaeroides).